The chain runs to 424 residues: Probable methyltransferase EP424R (424 aa).

Residues 103 to 315 (QIVTNAWLKM…TYIVGKNRLR (213 aa)) enclose the Adrift-type SAM-dependent 2'-O-MTase domain. S-adenosyl-L-methionine contacts are provided by Gly135 and Asp228. The active-site Proton acceptor is the Lys268.

It localises to the virion. The sequence is that of Probable methyltransferase EP424R from Ornithodoros (relapsing fever ticks).